The primary structure comprises 87 residues: Retinal rod rhodopsin-sensitive cGMP 3',5'-cyclic phosphodiesterase subunit gamma (87 aa).

An N-acetylmethionine modification is found at Met-1. The segment covering 1 to 12 (MNLEPPKGEIRS) has biased composition (basic and acidic residues). Residues 1-55 (MNLEPPKGEIRSATRVIGGPVTPRKGPPKFKQRQTRQFKSKPPKKGVQGFGDDIP) form a disordered region. Basic residues predominate over residues 26–44 (GPPKFKQRQTRQFKSKPPK).

It belongs to the rod/cone cGMP-PDE gamma subunit family. In terms of assembly, oligomer composed of two catalytic chains (alpha and beta), an inhibitory chain (gamma) and the delta chain.

It carries out the reaction 3',5'-cyclic GMP + H2O = GMP + H(+). Its function is as follows. Participates in processes of transmission and amplification of the visual signal. cGMP-PDEs are the effector molecules in G-protein-mediated phototransduction in vertebrate rods and cones. This Mus musculus (Mouse) protein is Retinal rod rhodopsin-sensitive cGMP 3',5'-cyclic phosphodiesterase subunit gamma (Pde6g).